A 950-amino-acid chain; its full sequence is MNPVAVTSVAPVDIIHDLRHSEHATEASPITLLHVFSRAVSQYPNHELNFITSSAHDSIHTKTFTEFDQYVRALAQAMLAWGKPAGSVIVVYLTEHEDNMAAIWASLFAGYVPCLQPALSAQQAHKEGHVAHIKNLFSSATWLTNESGAEQVQSIPGLDIHLLSELQASAETVSVDFQTHQPHLDDEAILFLTSGSTGFSKAVVHTHRTILAGCNAKGQSYGLTSESKIMNWVGFDHVVGSLGMHITPLLCGASQLHVHASAILSDSLRFLHLIEEKSIQLVFAPNFLLAKLTRDLEKRSDLFGKFDLSSIKRINSGGEAVVSSTAQAFARTLKNLAKDGDASFVFSTGFGMTETGAGCIYDTIDVLGTSPPHEFLEIGTPVAGCEMRIVNPEDGVTPRPDGESGELQVRGPMVFVRYYNNPETTSSSFVEGGWYRTGDVGIFEKGKMRLSGRIKDTVVVHGVSYGIPELETYLQTVEGVAHSFLVAAPYRAPGQETEGFVVFYSPTFDLDSEDAPAKLYATHRALRDVSVKLITLPPQQIIPLTLNQMEKSTLGKLSRARLLNLFKQGELAKYIIRAEELLGIARGANFVAPSTETEKTLAGIYAGIFHLSVSDISTSENFFEFGGTSIDAIRLKREAESAFDLSEIPTIQIFKHPEIITLAKYVDSLVSKDASEEEYDPIVPLQLTGKKTPIFMVHPGIGEVLIFVNLAKYFQNERPFYALRARGFEAGQPCFTSLDEMVSCYAAAIKRTQPHGPYAIAGYSYGGVIAFEVAKRLEVMGSEVQFTGIIDMIPHHMPRSDWTGGLLILSYFLGLVSKQDTNDLAPSMRPLARTEQFEMVWKLSPPERLVELQLTLEKLEHWVNVADSVREFAKKYEACSSVSVLDVFYAIPVRGTKEDWFNNHIKRWASYSRAEPSYVDVPGHHYTLMDFDHVPRFQKIFRARLEARGL.

The adenylation (A) domain stretch occupies residues 37–460 (SRAVSQYPNH…SGRIKDTVVV (424 aa)). The Carrier domain maps to 592-670 (APSTETEKTL…TLAKYVDSLV (79 aa)). Residues 597 to 667 (TEKTLAGIYA…EIITLAKYVD (71 aa)) are thiolation and peptide carrier (T) domain. O-(pantetheine 4'-phosphoryl)serine is present on Ser629. Residues 693–797 (PIFMVHPGIG…GIIDMIPHHM (105 aa)) are thioesterase (TE) domain.

This sequence belongs to the ATP-dependent AMP-binding enzyme family.

In terms of biological role, inactive atromentin synthetase homolog. Does not accept 4-hydroxyphenylpyruvate (4-HPP) as substrate. The protein is Inactive atromentin synthetase invA4 (invA4) of Paxillus involutus (Naked brimcap).